The chain runs to 216 residues: MOB kinase activator-like 2A (216 aa).

The Zn(2+) site is built by Cys81, Cys86, His162, and His167.

This sequence belongs to the MOB1/phocein family.

Its subcellular location is the nucleus. The chain is MOB kinase activator-like 2A from Arabidopsis thaliana (Mouse-ear cress).